A 163-amino-acid polypeptide reads, in one-letter code: Nucleotide-binding protein APL_1231 (163 aa).

The protein belongs to the YajQ family.

Its function is as follows. Nucleotide-binding protein. The chain is Nucleotide-binding protein APL_1231 from Actinobacillus pleuropneumoniae serotype 5b (strain L20).